The sequence spans 565 residues: Adenine deaminase (565 aa).

Belongs to the metallo-dependent hydrolases superfamily. Adenine deaminase family. Mn(2+) serves as cofactor.

It carries out the reaction adenine + H2O + H(+) = hypoxanthine + NH4(+). This chain is Adenine deaminase, found in Cereibacter sphaeroides (strain ATCC 17023 / DSM 158 / JCM 6121 / CCUG 31486 / LMG 2827 / NBRC 12203 / NCIMB 8253 / ATH 2.4.1.) (Rhodobacter sphaeroides).